The chain runs to 295 residues: Phosphatidylserine decarboxylase proenzyme (295 aa).

Residues Asp113, His169, and Ser256 each act as charge relay system; for autoendoproteolytic cleavage activity in the active site. Catalysis depends on Ser256, which acts as the Schiff-base intermediate with substrate; via pyruvic acid; for decarboxylase activity. Ser256 carries the post-translational modification Pyruvic acid (Ser); by autocatalysis.

The protein belongs to the phosphatidylserine decarboxylase family. PSD-B subfamily. Prokaryotic type II sub-subfamily. Heterodimer of a large membrane-associated beta subunit and a small pyruvoyl-containing alpha subunit. It depends on pyruvate as a cofactor. Post-translationally, is synthesized initially as an inactive proenzyme. Formation of the active enzyme involves a self-maturation process in which the active site pyruvoyl group is generated from an internal serine residue via an autocatalytic post-translational modification. Two non-identical subunits are generated from the proenzyme in this reaction, and the pyruvate is formed at the N-terminus of the alpha chain, which is derived from the carboxyl end of the proenzyme. The autoendoproteolytic cleavage occurs by a canonical serine protease mechanism, in which the side chain hydroxyl group of the serine supplies its oxygen atom to form the C-terminus of the beta chain, while the remainder of the serine residue undergoes an oxidative deamination to produce ammonia and the pyruvoyl prosthetic group on the alpha chain. During this reaction, the Ser that is part of the protease active site of the proenzyme becomes the pyruvoyl prosthetic group, which constitutes an essential element of the active site of the mature decarboxylase.

It is found in the cell membrane. The catalysed reaction is a 1,2-diacyl-sn-glycero-3-phospho-L-serine + H(+) = a 1,2-diacyl-sn-glycero-3-phosphoethanolamine + CO2. The protein operates within phospholipid metabolism; phosphatidylethanolamine biosynthesis; phosphatidylethanolamine from CDP-diacylglycerol: step 2/2. Catalyzes the formation of phosphatidylethanolamine (PtdEtn) from phosphatidylserine (PtdSer). This is Phosphatidylserine decarboxylase proenzyme from Clostridium botulinum (strain 657 / Type Ba4).